A 786-amino-acid polypeptide reads, in one-letter code: Digalactosyldiacylglycerol synthase 1, chloroplastic (786 aa).

The transit peptide at 1–25 (MASQRQPPSSSNAFSFLSKGWREVR) directs the protein to the chloroplast.

The protein belongs to the glycosyltransferase group 1 family. Glycosyltransferase 4 subfamily. As to expression, high expression in nodules infected cells, but low in nodule inner cortex and root central cylinder.

The protein resides in the plastid. The protein localises to the chloroplast outer membrane. It is found in the plastid outer membrane. It carries out the reaction a 1,2-diacyl-3-O-(beta-D-galactosyl)-sn-glycerol + UDP-alpha-D-galactose = a 1,2-diacyl-3-O-[alpha-D-galactosyl-(1-&gt;6)-beta-D-galactosyl]-sn-glycerol + UDP + H(+). Involved in the synthesis of diacylglycerol galactolipids that are specifically found in thylakoid and in nodule peribacteroid membranes. Specific for alpha-glycosidic linkages. This Lotus japonicus (Lotus corniculatus var. japonicus) protein is Digalactosyldiacylglycerol synthase 1, chloroplastic.